The primary structure comprises 421 residues: Histone-lysine N-methyltransferase SUV39H1 (421 aa).

One can recognise a Chromo domain in the interval 46 to 104 (FEVEYLWNYKKVQDQELYLVKWKYYPDSESTWEPRHHLKCNNLLKQFHLDLERELLRRA). The Pre-SET domain occupies 189 to 249 (AGCKCRDCFS…SCPNRVVQKG (61 aa)). Residues Cys191, Cys193, Cys196, Cys203, Cys204, Cys231, Cys235, Cys237, and Cys241 each contribute to the Zn(2+) site. One can recognise an SET domain in the interval 252-375 (YKFCIFRTSD…TGEELTFDYN (124 aa)). Residues 263–265 (RGW), Tyr306, and 332–333 (NH) contribute to the S-adenosyl-L-methionine site. Cys335, Cys409, Cys411, and Cys416 together coordinate Zn(2+). The Post-SET domain occupies 405–421 (VRVECKCGVSSCRKYLF).

It belongs to the class V-like SAM-binding methyltransferase superfamily. Histone-lysine methyltransferase family. Suvar3-9 subfamily.

The protein resides in the nucleus. It localises to the chromosome. It is found in the centromere. It catalyses the reaction L-lysyl(9)-[histone H3] + 3 S-adenosyl-L-methionine = N(6),N(6),N(6)-trimethyl-L-lysyl(9)-[histone H3] + 3 S-adenosyl-L-homocysteine + 3 H(+). Its function is as follows. Histone methyltransferase that specifically trimethylates 'Lys-9' of histone H3 using monomethylated H3 'Lys-9' as substrate. H3 'Lys-9' trimethylation represents a specific tag for epigenetic transcriptional repression by recruiting HP1 (CBX1, CBX3 and/or CBX5) proteins to methylated histones. Mainly functions in heterochromatin regions, thereby playing a central role in the establishment of constitutive heterochromatin at pericentric and telomere regions. H3 'Lys-9' trimethylation is also required to direct DNA methylation at pericentric repeats. SUV39H1 is targeted to histone H3 via its interaction with RB1 and is involved in many processes. The sequence is that of Histone-lysine N-methyltransferase SUV39H1 (suv39h1) from Xenopus laevis (African clawed frog).